Reading from the N-terminus, the 448-residue chain is Phosphoglucosamine mutase (448 aa).

Ser100 functions as the Phosphoserine intermediate in the catalytic mechanism. Mg(2+)-binding residues include Ser100, Asp240, Asp242, and Asp244. Position 100 is a phosphoserine (Ser100).

It belongs to the phosphohexose mutase family. Mg(2+) serves as cofactor. Post-translationally, activated by phosphorylation.

It carries out the reaction alpha-D-glucosamine 1-phosphate = D-glucosamine 6-phosphate. Catalyzes the conversion of glucosamine-6-phosphate to glucosamine-1-phosphate. The chain is Phosphoglucosamine mutase from Clostridium acetobutylicum (strain ATCC 824 / DSM 792 / JCM 1419 / IAM 19013 / LMG 5710 / NBRC 13948 / NRRL B-527 / VKM B-1787 / 2291 / W).